The primary structure comprises 537 residues: 5,6-dihydroxyindole-2-carboxylic acid oxidase (537 aa).

Positions 1 to 24 (MSAPKLLSLGCIFFPLLLFQQARA) are cleaved as a signal peptide. The Lumenal, melanosome portion of the chain corresponds to 25–477 (QFPRQCATVE…WPSREFSVPE (453 aa)). Cystine bridges form between C30–C41, C42–C65, C56–C99, C101–C110, and C113–C122. Residues N96 and N104 are each glycosylated (N-linked (GlcNAc...) asparagine). N181 carries an N-linked (GlcNAc...) asparagine glycan. Zn(2+) is bound by residues H192, H215, and H224. Cystine bridges form between C258–C261 and C290–C303. N-linked (GlcNAc...) asparagine glycosylation is found at N304 and N350. The Zn(2+) site is built by H377 and H381. N385 carries an N-linked (GlcNAc...) asparagine glycan. Residue H404 participates in Zn(2+) binding. A helical transmembrane segment spans residues 478–501 (IIAIAVVGALLLVALIFGTASYLI). The Cytoplasmic segment spans residues 502-537 (RARRSMDEANQPLLTDQYQCYAEEYEKLQNPNQSVV).

Belongs to the tyrosinase family. As to quaternary structure, monomer. Interacts with ATP7A. Interacts with SLC45A2. Cu(2+) serves as cofactor. The cofactor is Zn(2+). Glycosylated. In terms of tissue distribution, pigment cells.

The protein resides in the melanosome membrane. It carries out the reaction 2 5,6-dihydroxyindole-2-carboxylate + O2 = 2 indole-5,6-quinone-2-carboxylate + 2 H2O. The protein operates within pigment biosynthesis; melanin biosynthesis. Its activity is regulated as follows. The activity depends critically on the nature of the bound metal ion. Catalyzes the oxidation of 5,6-dihydroxyindole-2-carboxylic acid (DHICA) in the presence of bound Cu(2+) ions, but lacks activity in the presence of bound Zn(2+) ions. Functionally, plays a role in melanin biosynthesis. Catalyzes the oxidation of 5,6-dihydroxyindole-2-carboxylic acid (DHICA) into indole-5,6-quinone-2-carboxylic acid in the presence of bound Cu(2+) ions, but not in the presence of Zn(2+). May regulate or influence the type of melanin synthesized. Also to a lower extent, capable of hydroxylating tyrosine and producing melanin. In Homo sapiens (Human), this protein is 5,6-dihydroxyindole-2-carboxylic acid oxidase.